The sequence spans 206 residues: Protein phosphatase inhibitor 2 (206 aa).

Residues 1–36 (MAASTASHRPIKGILKNKTSAASPPVVPSAEQPRPI) form a disordered region. At alanine 2 the chain carries N-acetylalanine. Positions 12-17 (KGILKN) are required for binding PPP1CC. The segment at 44-56 (KSQKWDEMNILAT) is required for binding the 'RVXF' binding groove of PPP1CC. Serine 45 is modified (phosphoserine; by ATM). Residue threonine 74 is modified to Phosphothreonine. A disordered region spans residues 75-143 (PYHNMIGDDE…EREKKRQFEM (69 aa)). The span at 81–92 (GDDEDAYSDSEG) shows a compositional bias: acidic residues. Serine 88 and serine 90 each carry phosphoserine. Threonine 97 and threonine 117 each carry phosphothreonine. Residues 111-121 (SEPKYRTREQE) are compositionally biased toward basic and acidic residues. Serine 122, serine 123, and serine 131 each carry phosphoserine. Residues 122-131 (SSGEEDNDLS) show a composition bias toward acidic residues. A compositionally biased stretch (basic and acidic residues) spans 132-143 (PEEREKKRQFEM). Residues 148–151 (HYNE) are required for binding PPP1CC catalytic center, displacing metal ions and inhibition of PPP1CC catalytic activity. The segment at 164–206 (KDLHDDDEDEEMAETADGDSMNVEESSQGSTTSDHLQHKSQSS) is disordered. Acidic residues predominate over residues 168 to 180 (DDDEDEEMAETAD). Residues 186 to 206 (VEESSQGSTTSDHLQHKSQSS) are compositionally biased toward polar residues.

Belongs to the protein phosphatase inhibitor 2 family. Heterodimer with PP1. In terms of processing, phosphorylation on Ser-45 by ATM activates PP1 by dissociating the PP1-PPP1R2 complex. Phosphorylation on Thr-74 by GSK3 activates PP1 by dissociating the PP1-PPP1R2 complex.

Inhibitor of protein-phosphatase 1. This is Protein phosphatase inhibitor 2 (Ppp1r2) from Mus musculus (Mouse).